The sequence spans 616 residues: Proline--tRNA ligase (616 aa).

This sequence belongs to the class-II aminoacyl-tRNA synthetase family. ProS type 1 subfamily. Homodimer.

It is found in the cytoplasm. The enzyme catalyses tRNA(Pro) + L-proline + ATP = L-prolyl-tRNA(Pro) + AMP + diphosphate. Catalyzes the attachment of proline to tRNA(Pro) in a two-step reaction: proline is first activated by ATP to form Pro-AMP and then transferred to the acceptor end of tRNA(Pro). As ProRS can inadvertently accommodate and process non-cognate amino acids such as alanine and cysteine, to avoid such errors it has two additional distinct editing activities against alanine. One activity is designated as 'pretransfer' editing and involves the tRNA(Pro)-independent hydrolysis of activated Ala-AMP. The other activity is designated 'posttransfer' editing and involves deacylation of mischarged Ala-tRNA(Pro). The misacylated Cys-tRNA(Pro) is not edited by ProRS. This chain is Proline--tRNA ligase, found in Lactococcus lactis subsp. cremoris (strain SK11).